The primary structure comprises 248 residues: Triosephosphate isomerase (248 aa).

A substrate-binding site is contributed by 9–11; it reads NWK. His-94 acts as the Electrophile in catalysis. The Proton acceptor role is filled by Glu-166. Residues Gly-172, Ser-212, and 233–234 contribute to the substrate site; that span reads GG.

This sequence belongs to the triosephosphate isomerase family. As to quaternary structure, homodimer.

Its subcellular location is the cytoplasm. It catalyses the reaction D-glyceraldehyde 3-phosphate = dihydroxyacetone phosphate. The protein operates within carbohydrate biosynthesis; gluconeogenesis. It functions in the pathway carbohydrate degradation; glycolysis; D-glyceraldehyde 3-phosphate from glycerone phosphate: step 1/1. In terms of biological role, involved in the gluconeogenesis. Catalyzes stereospecifically the conversion of dihydroxyacetone phosphate (DHAP) to D-glyceraldehyde-3-phosphate (G3P). In Clostridium acetobutylicum (strain ATCC 824 / DSM 792 / JCM 1419 / IAM 19013 / LMG 5710 / NBRC 13948 / NRRL B-527 / VKM B-1787 / 2291 / W), this protein is Triosephosphate isomerase.